A 143-amino-acid chain; its full sequence is Putative complexin-1 (143 aa).

Residues 16 to 72 are disordered; sequence EVTGGLGMKDDGGEKTETGEDPEVIAARLEQEERRKEKHRKMENEREKMRQGIRDKY. Basic and acidic residues-rich tracts occupy residues 23–33 and 44–72; these read MKDDGGEKTET and LEQE…RDKY. Positions 40–71 form a coiled coil; sequence IAARLEQEERRKEKHRKMENEREKMRQGIRDK.

It belongs to the complexin/synaphin family.

The protein resides in the cytoplasm. It is found in the cytosol. Functionally, positively regulates a late step in synaptic vesicle exocytosis. This is Putative complexin-1 (cpx-1) from Caenorhabditis elegans.